Reading from the N-terminus, the 604-residue chain is MSEHDMQNTNPPLPPLPPEITQLLSGLDAAQWAWLSGYAWAKAGNGASAGLPALQTALPAAEPFSVTVLSASQTGNAKSVADKASDSLEAAGIQVRRAELKDYKAKNIADERRLLLVTSTQGEGEPPEEAVVLHKLLNGKKAPKLDKLQFAVLGLGDSSYPNFCRAGKDFDRRFEELGAKRLLERVDADLDFAAAADGWTGRIVARLKEEAAKNRATPAPQTTPPAGLQTAPDGRYCKADPFPAALLANQKITARQSDKDVRHIEIDLSGSDLHYLPGDALGVWFDNDPALVREILDLLGIDPATEIQAGGKTLPVASALLSHFELTQNTPAFVKGYAPFADDDELDRIAADNAVLQGFVQSTPIADVLHRFPAKLTAEQFAGLLRPLAPRLYSISSSQAEVGDEVHLTVGAVRFEHEGRARAGGASGFLADRLEEDGTVRVFVERNDGFRLPEDSRKPIVMIGSGTGVAPFRAFVQQRAAENAEGKNWLIFGNPHFARDFLYQTEWQQFAKDGFLHRYDFAWSRDQEEKIYVQDKIREQAEGLWQWLQEGAHIYVCGDAAKMAKDVEAALLDVIIGAGHLDEEGAEEYLDMLREEKRYQRDVY.

One can recognise a Flavodoxin-like domain in the interval 66–204; that stretch reads VTVLSASQTG…AADGWTGRIV (139 aa). Residues 72 to 77, 119 to 122, and 155 to 164 contribute to the FMN site; these read SQTGNA, STQG, and LGDSSYPNFC. The interval 212–231 is disordered; the sequence is AKNRATPAPQTTPPAGLQTA. Low complexity predominate over residues 216–231; the sequence is ATPAPQTTPPAGLQTA. In terms of domain architecture, FAD-binding FR-type spans 239–453; it reads ADPFPAALLA…VERNDGFRLP (215 aa). FAD-binding positions include Thr327, Gln361, 391 to 394, 409 to 411, and 424 to 427; these read RLYS, TVG, and GGAS. NADP(+)-binding positions include 524–525, 530–534, and Asp566; these read SR and KIYVQ. Tyr604 lines the FAD pocket.

The protein belongs to the NADPH-dependent sulphite reductase flavoprotein subunit CysJ family. In the N-terminal section; belongs to the flavodoxin family. It in the C-terminal section; belongs to the flavoprotein pyridine nucleotide cytochrome reductase family. As to quaternary structure, alpha(8)-beta(8). The alpha component is a flavoprotein, the beta component is a hemoprotein. Requires FAD as cofactor. FMN is required as a cofactor.

It carries out the reaction hydrogen sulfide + 3 NADP(+) + 3 H2O = sulfite + 3 NADPH + 4 H(+). It functions in the pathway sulfur metabolism; hydrogen sulfide biosynthesis; hydrogen sulfide from sulfite (NADPH route): step 1/1. In terms of biological role, component of the sulfite reductase complex that catalyzes the 6-electron reduction of sulfite to sulfide. This is one of several activities required for the biosynthesis of L-cysteine from sulfate. The flavoprotein component catalyzes the electron flow from NADPH -&gt; FAD -&gt; FMN to the hemoprotein component. The chain is Sulfite reductase [NADPH] flavoprotein alpha-component from Neisseria meningitidis serogroup C / serotype 2a (strain ATCC 700532 / DSM 15464 / FAM18).